The sequence spans 549 residues: Cytoplasmic trehalase (549 aa).

Residues arginine 168, 175 to 176 (WD), asparagine 212, 221 to 223 (RSQ), 292 to 294 (RDE), and glycine 324 each bind substrate. Catalysis depends on proton donor/acceptor residues aspartate 326 and glutamate 509. Glutamate 525 is a binding site for substrate.

The protein belongs to the glycosyl hydrolase 37 family. Monomer.

The protein resides in the cytoplasm. It catalyses the reaction alpha,alpha-trehalose + H2O = alpha-D-glucose + beta-D-glucose. It participates in glycan degradation; trehalose degradation; D-glucose from alpha,alpha-trehalose: step 1/1. In terms of biological role, hydrolyzes trehalose to glucose. Could be involved, in cells returning to low osmolarity conditions, in the utilization of the accumulated cytoplasmic trehalose, which was synthesized in response to high osmolarity. The polypeptide is Cytoplasmic trehalase (Escherichia coli O157:H7).